Consider the following 248-residue polypeptide: Probable succinyl-CoA:3-ketoacid coenzyme A transferase subunit A (248 aa).

Residue 24-30 coordinates CoA; that stretch reads GGFGLCG.

It belongs to the 3-oxoacid CoA-transferase subunit A family. As to quaternary structure, heterodimer of a subunit A and a subunit B.

It catalyses the reaction a 3-oxo acid + succinyl-CoA = a 3-oxoacyl-CoA + succinate. The protein is Probable succinyl-CoA:3-ketoacid coenzyme A transferase subunit A (scoA) of Mycobacterium bovis (strain ATCC BAA-935 / AF2122/97).